The chain runs to 65 residues: KappaPI-actitoxin-Ael3a (65 aa).

The region spanning 5-55 (CLLPKKQGFCRARFPRFYYNSSTRRCEMFYYGGCGGNANNFNTLEECEKVC) is the BPTI/Kunitz inhibitor domain. Disulfide bonds link Cys-5-Cys-55, Cys-14-Cys-38, and Cys-30-Cys-51.

The protein belongs to the venom Kunitz-type family. Sea anemone type 2 potassium channel toxin subfamily.

It localises to the secreted. The protein resides in the nematocyst. In terms of biological role, dual-function toxin that inhibits both serine proteases (trypsin Kd=124 nM) and voltage-gated potassium channels rKv1.1/KCNA1 (IC(50)=0.9 nM). The activity on the Kv1.1/KCNA1 is selective and reversible. The toxin presumably acts by blocking the channel pore in the open state. This Anthopleura elegantissima (Green aggregating anemone) protein is KappaPI-actitoxin-Ael3a.